The primary structure comprises 202 residues: Large ribosomal subunit protein bL9 (202 aa).

The tract at residues 176 to 202 is disordered; that stretch reads AAGEFFDPDAQHDDEPAAEDDQNAEEK. Acidic residues predominate over residues 191–202; it reads PAAEDDQNAEEK.

This sequence belongs to the bacterial ribosomal protein bL9 family.

Binds to the 23S rRNA. This is Large ribosomal subunit protein bL9 from Nitrobacter winogradskyi (strain ATCC 25391 / DSM 10237 / CIP 104748 / NCIMB 11846 / Nb-255).